A 468-amino-acid chain; its full sequence is Kynureninase 2 (468 aa).

Residues Leu134, Thr135, Phe162–Asp165, Asp247, His250, and Tyr272 contribute to the pyridoxal 5'-phosphate site. Position 273 is an N6-(pyridoxal phosphate)lysine (Lys273). Residues Trp312 and Asn340 each contribute to the pyridoxal 5'-phosphate site.

Belongs to the kynureninase family. Homodimer. Requires pyridoxal 5'-phosphate as cofactor.

The protein localises to the cytoplasm. It carries out the reaction L-kynurenine + H2O = anthranilate + L-alanine + H(+). The catalysed reaction is 3-hydroxy-L-kynurenine + H2O = 3-hydroxyanthranilate + L-alanine + H(+). It functions in the pathway amino-acid degradation; L-kynurenine degradation; L-alanine and anthranilate from L-kynurenine: step 1/1. It participates in cofactor biosynthesis; NAD(+) biosynthesis; quinolinate from L-kynurenine: step 2/3. Functionally, catalyzes the cleavage of L-kynurenine (L-Kyn) and L-3-hydroxykynurenine (L-3OHKyn) into anthranilic acid (AA) and 3-hydroxyanthranilic acid (3-OHAA), respectively. This Aspergillus oryzae (strain ATCC 42149 / RIB 40) (Yellow koji mold) protein is Kynureninase 2 (bna5-2).